We begin with the raw amino-acid sequence, 380 residues long: Cystathionine beta-lyase (380 aa).

Lys-196 bears the N6-(pyridoxal phosphate)lysine mark.

Belongs to the trans-sulfuration enzymes family. Pyridoxal 5'-phosphate serves as cofactor.

It is found in the cytoplasm. It carries out the reaction L,L-cystathionine + H2O = L-homocysteine + pyruvate + NH4(+). It catalyses the reaction an S-substituted L-cysteine + H2O = a thiol + pyruvate + NH4(+). It functions in the pathway amino-acid biosynthesis; L-methionine biosynthesis via de novo pathway; L-homocysteine from L-cystathionine: step 1/1. Functionally, the enzymatic degradation of amino acids in cheese is believed to generate aroma compounds and therefore to be essential for flavor development. Cystathionine beta-lyase (CBL) can convert cystathionine to homocysteine but is also able to catalyze an alpha, gamma elimination. With methionine as a substrate, it produces volatile sulfur compounds which are important for flavor formation in Gouda cheese. The polypeptide is Cystathionine beta-lyase (metC) (Lactococcus lactis subsp. cremoris (Streptococcus cremoris)).